A 174-amino-acid polypeptide reads, in one-letter code: Cytochrome c-type biogenesis protein CcmE (174 aa).

Residues 1-8 (MNPRRKSR) lie on the Cytoplasmic side of the membrane. A helical; Signal-anchor for type II membrane protein membrane pass occupies residues 9–29 (LSVVLFILLGISVASALVLYA). Over 30–174 (LRQNIDLFYT…QEKQFKEGNQ (145 aa)) the chain is Periplasmic. Heme is bound by residues His131 and Tyr135. The interval 149–174 (KPMGISDLKNESDRDRQEKQFKEGNQ) is disordered. The span at 156–174 (LKNESDRDRQEKQFKEGNQ) shows a compositional bias: basic and acidic residues.

This sequence belongs to the CcmE/CycJ family.

Its subcellular location is the cell inner membrane. Its function is as follows. Heme chaperone required for the biogenesis of c-type cytochromes. Transiently binds heme delivered by CcmC and transfers the heme to apo-cytochromes in a process facilitated by CcmF and CcmH. In Histophilus somni (strain 2336) (Haemophilus somnus), this protein is Cytochrome c-type biogenesis protein CcmE.